The sequence spans 313 residues: 3-ketodihydrosphingosine reductase TSC10 (313 aa).

An NADP(+)-binding site is contributed by leucine 12. NADPH-binding residues include glycine 15, serine 17, and glycine 19. A GXSXG motif is present at residues 15 to 19 (GGSQG). An NADP(+)-binding site is contributed by leucine 20. Residues arginine 47, lysine 51, and aspartate 86 each contribute to the NADPH site. NADP(+) is bound at residue aspartate 86. Catalysis depends on serine 160, which acts as the Proton donor. The NADP(+) site is built by tyrosine 174, lysine 178, and serine 207. Catalysis depends on tyrosine 174, which acts as the Proton acceptor. The Lowers pKa of active site Tyr role is filled by lysine 178. The helical transmembrane segment at 278–298 (VFSWILGALLNITIVPIYMLI) threads the bilayer.

It belongs to the short-chain dehydrogenases/reductases (SDR) family.

It is found in the endoplasmic reticulum membrane. The catalysed reaction is sphinganine + NADP(+) = 3-oxosphinganine + NADPH + H(+). Its pathway is lipid metabolism; sphingolipid metabolism. Functionally, catalyzes the reduction of 3'-oxosphinganine (3-ketodihydrosphingosine/KDS) to sphinganine (dihydrosphingosine/DHS), the second step of de novo sphingolipid biosynthesis. This Kluyveromyces lactis (strain ATCC 8585 / CBS 2359 / DSM 70799 / NBRC 1267 / NRRL Y-1140 / WM37) (Yeast) protein is 3-ketodihydrosphingosine reductase TSC10 (TSC10).